Here is a 174-residue protein sequence, read N- to C-terminus: Large ribosomal subunit protein bL17 (174 aa).

The protein belongs to the bacterial ribosomal protein bL17 family. As to quaternary structure, part of the 50S ribosomal subunit. Contacts protein L32.

The sequence is that of Large ribosomal subunit protein bL17 from Acetivibrio thermocellus (strain ATCC 27405 / DSM 1237 / JCM 9322 / NBRC 103400 / NCIMB 10682 / NRRL B-4536 / VPI 7372) (Clostridium thermocellum).